We begin with the raw amino-acid sequence, 142 residues long: Universal stress protein G (142 aa).

Belongs to the universal stress protein A family.

The sequence is that of Universal stress protein G (uspG) from Escherichia coli O157:H7.